A 376-amino-acid chain; its full sequence is UDP-N-acetylglucosamine--N-acetylmuramyl-(pentapeptide) pyrophosphoryl-undecaprenol N-acetylglucosamine transferase (376 aa).

UDP-N-acetyl-alpha-D-glucosamine is bound by residues 11 to 13 (TGG), Asn-117, Arg-160, Ser-208, and Gln-310.

It belongs to the glycosyltransferase 28 family. MurG subfamily.

It is found in the cell inner membrane. It carries out the reaction di-trans,octa-cis-undecaprenyl diphospho-N-acetyl-alpha-D-muramoyl-L-alanyl-D-glutamyl-meso-2,6-diaminopimeloyl-D-alanyl-D-alanine + UDP-N-acetyl-alpha-D-glucosamine = di-trans,octa-cis-undecaprenyl diphospho-[N-acetyl-alpha-D-glucosaminyl-(1-&gt;4)]-N-acetyl-alpha-D-muramoyl-L-alanyl-D-glutamyl-meso-2,6-diaminopimeloyl-D-alanyl-D-alanine + UDP + H(+). Its pathway is cell wall biogenesis; peptidoglycan biosynthesis. Cell wall formation. Catalyzes the transfer of a GlcNAc subunit on undecaprenyl-pyrophosphoryl-MurNAc-pentapeptide (lipid intermediate I) to form undecaprenyl-pyrophosphoryl-MurNAc-(pentapeptide)GlcNAc (lipid intermediate II). The protein is UDP-N-acetylglucosamine--N-acetylmuramyl-(pentapeptide) pyrophosphoryl-undecaprenol N-acetylglucosamine transferase of Rickettsia peacockii (strain Rustic).